Here is a 158-residue protein sequence, read N- to C-terminus: Dihydroneopterin triphosphate diphosphatase (158 aa).

Residues Lys14, Arg36, and Thr47 each contribute to the substrate site. In terms of domain architecture, Nudix hydrolase spans 14–153 (KNNQSVLVVI…NNAEAIKKYL (140 aa)). The short motif at 48–69 (GTIESDETPKKTAIRELWEEVR) is the Nudix box element. Residues Glu63 and Glu67 each contribute to the Mg(2+) site. Position 88–91 (88–91 (FEIF)) interacts with substrate. Glu124 serves as a coordination point for Mg(2+). Ser142 contacts substrate.

Belongs to the Nudix hydrolase family. Requires Mg(2+) as cofactor.

The catalysed reaction is 7,8-dihydroneopterin 3'-triphosphate + H2O = 7,8-dihydroneopterin 3'-phosphate + diphosphate + H(+). Functionally, catalyzes the hydrolysis of dihydroneopterin triphosphate to dihydroneopterin monophosphate and pyrophosphate. Required for efficient folate biosynthesis. Can also hydrolyze nucleoside triphosphates with a preference for dATP. The polypeptide is Dihydroneopterin triphosphate diphosphatase (nudB) (Haemophilus influenzae (strain ATCC 51907 / DSM 11121 / KW20 / Rd)).